The sequence spans 461 residues: MGKFQSKHAAAACKRRESPEGDSFVVPAYGSGRRGAEETDRRAGSGVEHRSRDKQELLNGDPKEGPFWDDKGSLEVVLPPEKSEGHEGQGQLFSTDDGEKAASREGPLRLSKKHLNIDALQCDVSVEEDNRQEWTFTLYDFDNSGKVTREDMSSLMHTIYEVVDASVNHSSGSSKTLRVKLTVSPEPSSKKECPLTGQDREPTRGRTEIELTDEPRVADRRLSAYSRKPNADPQPCSVRVPYCVDENTERRNHYLDLAGIENYTSKFGPGSPPEQARQEHHGRATHIPSRSRSQESDAHAIHHRRSQVLAEHVIPANEPATRALAAQPRIKGQEKQFLRSPKGPGKPLGTPGSGKPGKALSYCLQAVPLPQSAQDGHHLPQPPPQPPPQPYGHKRYRQKAREGHSPLKGHGQPTMVEHEVVRDLPPMLGPEGYVMPVVQRHEHHHHHEHHHHHHHHHFHPS.

A disordered region spans residues 1–106; it reads MGKFQSKHAA…DGEKAASREG (106 aa). A lipid anchor (N-myristoyl glycine) is attached at glycine 2. 2 stretches are compositionally biased toward basic and acidic residues: residues 34-73 and 97-106; these read RGAE…DKGS and DGEKAASREG. The interval 121 to 186 is interaction with DVL1, DVL2 and DVL3; sequence QCDVSVEEDN…LRVKLTVSPE (66 aa). Residues 127-162 form the EF-hand domain; it reads EEDNRQEWTFTLYDFDNSGKVTREDMSSLMHTIYEV. Residues aspartate 140, aspartate 142, serine 144, lysine 146, and aspartate 151 each contribute to the Ca(2+) site. 5 disordered regions span residues 176–205, 263–302, 321–359, 372–414, and 441–461; these read TLRV…PTRG, YTSK…HAIH, TRAL…PGKA, SAQD…GQPT, and HEHH…FHPS. Residues 188–205 show a composition bias toward basic and acidic residues; the sequence is SSKKECPLTGQDREPTRG. Positions 307 to 396 are interaction with TGFA; it reads QVLAEHVIPA…PPQPYGHKRY (90 aa). Low complexity predominate over residues 341–350; the sequence is PKGPGKPLGT. Over residues 380–390 the composition is skewed to pro residues; the sequence is PQPPPQPPPQP.

This sequence belongs to the NKD family. Interacts with RNF25, TGFA (via cytoplasmic domain), and PPP2R3A. Interacts with DVL1, DVL2 and DVL3. In terms of processing, ubiquitinated, leading to rapid proteasomal degradation. Interaction with TGFA interferes with RNF25 binding and protects against ubiquitination mediated by RNF25. Expressed in the cecum, colon, esophagus, ileum, jejunum, skin and stomach.

The protein resides in the cell membrane. The protein localises to the cytoplasm. It is found in the cytoplasmic vesicle. Functionally, cell autonomous antagonist of the canonical Wnt signaling pathway. May activate a second Wnt signaling pathway that controls planar cell polarity. Required for processing of TGFA and for targeting of TGFA to the basolateral membrane of polarized epithelial cells. This chain is Protein naked cuticle homolog 2 (Nkd2), found in Mus musculus (Mouse).